We begin with the raw amino-acid sequence, 370 residues long: tRNA-specific 2-thiouridylase MnmA (370 aa).

ATP contacts are provided by residues 11 to 18 (AMSGGVDS) and Met-37. Residues 99-101 (NPD) are interaction with target base in tRNA. The active-site Nucleophile is the Cys-104. A disulfide bond links Cys-104 and Cys-201. Gly-129 is a binding site for ATP. The segment at 151–153 (KDQ) is interaction with tRNA. Cys-201 serves as the catalytic Cysteine persulfide intermediate. Positions 313–314 (RY) are interaction with tRNA.

This sequence belongs to the MnmA/TRMU family. Interacts with TusE.

It localises to the cytoplasm. It carries out the reaction S-sulfanyl-L-cysteinyl-[protein] + uridine(34) in tRNA + AH2 + ATP = 2-thiouridine(34) in tRNA + L-cysteinyl-[protein] + A + AMP + diphosphate + H(+). Functionally, catalyzes the 2-thiolation of uridine at the wobble position (U34) of tRNA(Lys), tRNA(Glu) and tRNA(Gln), leading to the formation of s(2)U34, the first step of tRNA-mnm(5)s(2)U34 synthesis. Sulfur is provided by IscS, via a sulfur-relay system. Binds ATP and its substrate tRNAs. The polypeptide is tRNA-specific 2-thiouridylase MnmA (Buchnera aphidicola subsp. Baizongia pistaciae (strain Bp)).